The chain runs to 66 residues: Antimicrobial peptide Eval967 (66 aa).

The signal sequence occupies residues 1-22; that stretch reads MKFSALLPVFFLLLAVIDYCQA. The residue at position 36 (L36) is a Leucine amide. The propeptide occupies 37–66; that stretch reads GKRDVKTQKYVDIKRRDLDLDDMLSKLFED.

It belongs to the non-disulfide-bridged peptide (NDBP) superfamily. Short antimicrobial peptide (group 4) family. In terms of tissue distribution, expressed by the venom gland.

It is found in the secreted. Functionally, probable antimicrobial peptide. Has no inhibitory activity against herpes simplex virus type 1 (HSV-1). The protein is Antimicrobial peptide Eval967 of Euscorpiops validus (Scorpion).